The sequence spans 264 residues: Chanoclavine-I dehydrogenase easD (264 aa).

The N-terminal stretch at 1 to 20 (MASVSSKIFAITGGASGIGA) is a signal peptide. Residues isoleucine 18, aspartate 66, arginine 132, tyrosine 169, lysine 173, and threonine 204 each contribute to the NADP(+) site. Residue tyrosine 169 is the Proton donor of the active site. Catalysis depends on lysine 173, which acts as the Lowers pKa of active site Tyr.

This sequence belongs to the short-chain dehydrogenases/reductases (SDR) family. In terms of assembly, homotetramer.

It catalyses the reaction chanoclavine-I + NAD(+) = chanoclavine-I aldehyde + NADH + H(+). Its pathway is alkaloid biosynthesis; ergot alkaloid biosynthesis. Functionally, chanoclavine-I dehydrogenase; part of the gene cluster that mediates the biosynthesis of fungal ergot alkaloid. DmaW catalyzes the first step of ergot alkaloid biosynthesis by condensing dimethylallyl diphosphate (DMAP) and tryptophan to form 4-dimethylallyl-L-tryptophan. The second step is catalyzed by the methyltransferase easF that methylates 4-dimethylallyl-L-tryptophan in the presence of S-adenosyl-L-methionine, resulting in the formation of 4-dimethylallyl-L-abrine. The catalase easC and the FAD-dependent oxidoreductase easE then transform 4-dimethylallyl-L-abrine to chanoclavine-I which is further oxidized by easD in the presence of NAD(+), resulting in the formation of chanoclavine-I aldehyde. Chanoclavine-I aldehyde is the precursor of ergoamides and ergopeptines in Clavicipitaceae, and clavine-type alcaloids such as fumiclavine in Trichocomaceae. However, the metabolites downstream of chanoclavine-I aldehyde in Arthrodermataceae have not been identified yet. In Arthroderma otae (strain ATCC MYA-4605 / CBS 113480) (Microsporum canis), this protein is Chanoclavine-I dehydrogenase easD.